A 180-amino-acid polypeptide reads, in one-letter code: Large ribosomal subunit protein uL6 (180 aa).

Belongs to the universal ribosomal protein uL6 family. As to quaternary structure, part of the 50S ribosomal subunit.

Its function is as follows. This protein binds to the 23S rRNA, and is important in its secondary structure. It is located near the subunit interface in the base of the L7/L12 stalk, and near the tRNA binding site of the peptidyltransferase center. This chain is Large ribosomal subunit protein uL6, found in Cutibacterium acnes (strain DSM 16379 / KPA171202) (Propionibacterium acnes).